A 483-amino-acid polypeptide reads, in one-letter code: Altronate oxidoreductase (483 aa).

18-29 (IIQFGEGNFLRA) provides a ligand contact to NAD(+).

It belongs to the mannitol dehydrogenase family. UxaB subfamily.

It carries out the reaction D-altronate + NAD(+) = keto-D-tagaturonate + NADH + H(+). It participates in carbohydrate metabolism; pentose and glucuronate interconversion. In Escherichia coli O7:K1 (strain IAI39 / ExPEC), this protein is Altronate oxidoreductase.